The following is a 279-amino-acid chain: Bifunctional protein FolD (279 aa).

Residues 162 to 164 (GRS), Ser187, and Ile228 each bind NADP(+).

The protein belongs to the tetrahydrofolate dehydrogenase/cyclohydrolase family. In terms of assembly, homodimer.

It catalyses the reaction (6R)-5,10-methylene-5,6,7,8-tetrahydrofolate + NADP(+) = (6R)-5,10-methenyltetrahydrofolate + NADPH. The enzyme catalyses (6R)-5,10-methenyltetrahydrofolate + H2O = (6R)-10-formyltetrahydrofolate + H(+). It functions in the pathway one-carbon metabolism; tetrahydrofolate interconversion. Its function is as follows. Catalyzes the oxidation of 5,10-methylenetetrahydrofolate to 5,10-methenyltetrahydrofolate and then the hydrolysis of 5,10-methenyltetrahydrofolate to 10-formyltetrahydrofolate. The sequence is that of Bifunctional protein FolD from Acidiphilium cryptum (strain JF-5).